We begin with the raw amino-acid sequence, 356 residues long: UDP-N-acetylglucosamine--N-acetylmuramyl-(pentapeptide) pyrophosphoryl-undecaprenol N-acetylglucosamine transferase (356 aa).

Residues 12 to 14 (TGG), asparagine 124, arginine 163, serine 188, isoleucine 242, and glutamine 287 contribute to the UDP-N-acetyl-alpha-D-glucosamine site.

This sequence belongs to the glycosyltransferase 28 family. MurG subfamily.

Its subcellular location is the cell inner membrane. The catalysed reaction is di-trans,octa-cis-undecaprenyl diphospho-N-acetyl-alpha-D-muramoyl-L-alanyl-D-glutamyl-meso-2,6-diaminopimeloyl-D-alanyl-D-alanine + UDP-N-acetyl-alpha-D-glucosamine = di-trans,octa-cis-undecaprenyl diphospho-[N-acetyl-alpha-D-glucosaminyl-(1-&gt;4)]-N-acetyl-alpha-D-muramoyl-L-alanyl-D-glutamyl-meso-2,6-diaminopimeloyl-D-alanyl-D-alanine + UDP + H(+). It functions in the pathway cell wall biogenesis; peptidoglycan biosynthesis. Cell wall formation. Catalyzes the transfer of a GlcNAc subunit on undecaprenyl-pyrophosphoryl-MurNAc-pentapeptide (lipid intermediate I) to form undecaprenyl-pyrophosphoryl-MurNAc-(pentapeptide)GlcNAc (lipid intermediate II). The polypeptide is UDP-N-acetylglucosamine--N-acetylmuramyl-(pentapeptide) pyrophosphoryl-undecaprenol N-acetylglucosamine transferase (Pseudomonas syringae pv. tomato (strain ATCC BAA-871 / DC3000)).